The primary structure comprises 173 residues: 3-isopropylmalate dehydratase small subunit (173 aa).

The protein belongs to the LeuD family. LeuD type 2 subfamily. Heterodimer of LeuC and LeuD.

The catalysed reaction is (2R,3S)-3-isopropylmalate = (2S)-2-isopropylmalate. The protein operates within amino-acid biosynthesis; L-leucine biosynthesis; L-leucine from 3-methyl-2-oxobutanoate: step 2/4. In terms of biological role, catalyzes the isomerization between 2-isopropylmalate and 3-isopropylmalate, via the formation of 2-isopropylmaleate. This is 3-isopropylmalate dehydratase small subunit from Caldicellulosiruptor saccharolyticus (strain ATCC 43494 / DSM 8903 / Tp8T 6331).